Here is a 513-residue protein sequence, read N- to C-terminus: Histidine ammonia-lyase (513 aa).

Residues 142–144 (ASG) constitute a cross-link (5-imidazolinone (Ala-Gly)). Residue serine 143 is modified to 2,3-didehydroalanine (Ser).

The protein belongs to the PAL/histidase family. Post-translationally, contains an active site 4-methylidene-imidazol-5-one (MIO), which is formed autocatalytically by cyclization and dehydration of residues Ala-Ser-Gly.

The protein localises to the cytoplasm. The enzyme catalyses L-histidine = trans-urocanate + NH4(+). Its pathway is amino-acid degradation; L-histidine degradation into L-glutamate; N-formimidoyl-L-glutamate from L-histidine: step 1/3. This is Histidine ammonia-lyase from Methylobacterium sp. (strain 4-46).